Reading from the N-terminus, the 59-residue chain is Small ribosomal subunit protein eS30 (59 aa).

The interval 1 to 35 (KVHGSLARAGKVRGQTPKVAKQEKKKKKTGRAKRR) is disordered. Basic residues predominate over residues 23-35 (EKKKKKTGRAKRR). The residue at position 51 (Lys51) is an N6-succinyllysine.

This sequence belongs to the eukaryotic ribosomal protein eS30 family.

This chain is Small ribosomal subunit protein eS30 (Fau), found in Mus spicilegus (Steppe mouse).